Here is a 366-residue protein sequence, read N- to C-terminus: Left-right determination factor 1 (366 aa).

Positions 1–21 are cleaved as a signal peptide; that stretch reads MQPLWLCWALWVLPLASPGAA. The propeptide at 22 to 76 is or 135; it reads LTGEQLLGSLLRQLQLKEVPTLDRADMEELVIPTHVRAQYVALLQRSHGDRSRGK. The N-linked (GlcNAc...) asparagine glycan is linked to Asn-158. 4 disulfide bridges follow: Cys-251-Cys-264, Cys-263-Cys-316, Cys-293-Cys-351, and Cys-297-Cys-353.

It belongs to the TGF-beta family. In terms of processing, the processing of the protein may also occur at the second R-X-X-R site located at AA 132-135. Processing appears to be regulated in a cell-type specific manner.

Its subcellular location is the secreted. Its function is as follows. Required for left-right axis determination as a regulator of LEFTY2 and NODAL. The protein is Left-right determination factor 1 (LEFTY1) of Homo sapiens (Human).